We begin with the raw amino-acid sequence, 170 residues long: Adenine phosphoribosyltransferase (170 aa).

Belongs to the purine/pyrimidine phosphoribosyltransferase family. As to quaternary structure, homodimer.

It is found in the cytoplasm. The enzyme catalyses AMP + diphosphate = 5-phospho-alpha-D-ribose 1-diphosphate + adenine. Its pathway is purine metabolism; AMP biosynthesis via salvage pathway; AMP from adenine: step 1/1. Functionally, catalyzes a salvage reaction resulting in the formation of AMP, that is energically less costly than de novo synthesis. This chain is Adenine phosphoribosyltransferase, found in Brachyspira hyodysenteriae (strain ATCC 49526 / WA1).